Reading from the N-terminus, the 403-residue chain is Cytochrome P450-SU2 (403 aa).

The tract at residues Met-1–Pro-24 is disordered. Residue Cys-352 coordinates heme.

This sequence belongs to the cytochrome P450 family. Requires heme as cofactor.

In terms of biological role, metabolism of a number of sulfonylurea herbicides. The polypeptide is Cytochrome P450-SU2 (cyp105B1) (Streptomyces griseolus).